The chain runs to 261 residues: MLLAWVRTILVSNMLLAEAYGSGGCFWDNGHLYRADQPSPAPGHSCLNWLDAQSGLAFAPESGAGNHSYCRNPDQDPRGPWCYVSGEAGAPEKRPCQDLRCPDTTSQGLPTSATETEEAAEVPGGDEVFAPANALPARSEAAAVQPVIGISQRVRVNSKEKKDLGTLGYVLGITMMVIIVVIGAGIVLGYTYKRGKDLKAQHEQKVCERELQRITLPLSAFTNPTCEIVDEKTVVVHASQTPVDLQEGSAPLMGQAGTPGA.

Residues 1 to 21 (MLLAWVRTILVSNMLLAEAYG) form the signal peptide. Residues 22 to 166 (SGGCFWDNGH…NSKEKKDLGT (145 aa)) lie on the Extracellular side of the membrane. The Kringle domain maps to 24–101 (GCFWDNGHLY…EKRPCQDLRC (78 aa)). Disulfide bonds link Cys-25–Cys-101, Cys-46–Cys-82, and Cys-70–Cys-96. The span at 90–101 (APEKRPCQDLRC) shows a compositional bias: basic and acidic residues. The interval 90 to 122 (APEKRPCQDLRCPDTTSQGLPTSATETEEAAEV) is disordered. Residues 167 to 187 (LGYVLGITMMVIIVVIGAGIV) form a helical membrane-spanning segment. The Cytoplasmic segment spans residues 188–261 (LGYTYKRGKD…LMGQAGTPGA (74 aa)).

It is found in the cell membrane. Its function is as follows. Negative regulator of hepatic phosphatidylinositol 3-kinase (PI3K) activity. This Bos taurus (Bovine) protein is Phosphoinositide-3-kinase-interacting protein 1 (PIK3IP1).